Consider the following 59-residue polypeptide: UPF0391 membrane protein AZC_4184 (59 aa).

2 helical membrane passes run 4–24 (WALT…TAVA) and 30–50 (IAKI…VMGF).

This sequence belongs to the UPF0391 family.

The protein resides in the cell membrane. The polypeptide is UPF0391 membrane protein AZC_4184 (Azorhizobium caulinodans (strain ATCC 43989 / DSM 5975 / JCM 20966 / LMG 6465 / NBRC 14845 / NCIMB 13405 / ORS 571)).